The sequence spans 245 residues: MTFELKHRDRSHLSHHFNAILGNPPVEWKISDHLVEYPEALRYMQERVEKILAKTAHEQVWLLEHPSLYTAGTSADKKDLLAPHLFPVYEAGRGGEFTYHGPGQRIAYIMLDLKRRKQDIRAFISALEEWIIQMLASFNIKGERREDRVGVWVKQSHCPSKKNDLSSEDKIAAIGIRVRKWISFHGVSINVNPNLAHYSGIVPCGITNHGVTSFLNLGCPVTMHDIDIALKHAFEKIFGPTIDVS.

Residues 54–242 (KTAHEQVWLL…AFEKIFGPTI (189 aa)) enclose the BPL/LPL catalytic domain. Substrate contacts are provided by residues 93–100 (RGGEFTYH), 173–175 (AIG), and 186–188 (GVS). The active-site Acyl-thioester intermediate is the cysteine 204.

It belongs to the LipB family.

The protein localises to the cytoplasm. The catalysed reaction is octanoyl-[ACP] + L-lysyl-[protein] = N(6)-octanoyl-L-lysyl-[protein] + holo-[ACP] + H(+). It functions in the pathway protein modification; protein lipoylation via endogenous pathway; protein N(6)-(lipoyl)lysine from octanoyl-[acyl-carrier-protein]: step 1/2. In terms of biological role, catalyzes the transfer of endogenously produced octanoic acid from octanoyl-acyl-carrier-protein onto the lipoyl domains of lipoate-dependent enzymes. Lipoyl-ACP can also act as a substrate although octanoyl-ACP is likely to be the physiological substrate. The sequence is that of Octanoyltransferase from Bartonella tribocorum (strain CIP 105476 / IBS 506).